Reading from the N-terminus, the 179-residue chain is tRNA-splicing endonuclease (179 aa).

Catalysis depends on residues Tyr115, His125, and Lys156.

It belongs to the tRNA-intron endonuclease family. Archaeal short subfamily. In terms of assembly, homotetramer; although the tetramer contains four active sites, only two participate in the cleavage. Therefore, it should be considered as a dimer of dimers.

It catalyses the reaction pretRNA = a 3'-half-tRNA molecule with a 5'-OH end + a 5'-half-tRNA molecule with a 2',3'-cyclic phosphate end + an intron with a 2',3'-cyclic phosphate and a 5'-hydroxyl terminus.. Its function is as follows. Endonuclease that removes tRNA introns. Cleaves pre-tRNA at the 5'- and 3'-splice sites to release the intron. The products are an intron and two tRNA half-molecules bearing 2',3' cyclic phosphate and 5'-OH termini. Recognizes a pseudosymmetric substrate in which 2 bulged loops of 3 bases are separated by a stem of 4 bp. The sequence is that of tRNA-splicing endonuclease (endA) from Methanocaldococcus jannaschii (strain ATCC 43067 / DSM 2661 / JAL-1 / JCM 10045 / NBRC 100440) (Methanococcus jannaschii).